Reading from the N-terminus, the 349-residue chain is NADH-quinone oxidoreductase subunit H (349 aa).

Helical transmembrane passes span 11 to 31 (FPLL…LLLV), 83 to 103 (GVFL…WAVI), 116 to 136 (VGLL…IMGG), 162 to 182 (IGFV…TTIV), 200 to 220 (FLDW…ISAL), 252 to 272 (LFFL…TILF), 288 to 308 (VPGI…FAMV), and 323 to 343 (LGWK…AAFL).

This sequence belongs to the complex I subunit 1 family. NDH-1 is composed of 14 different subunits. Subunits NuoA, H, J, K, L, M, N constitute the membrane sector of the complex.

Its subcellular location is the cell inner membrane. The catalysed reaction is a quinone + NADH + 5 H(+)(in) = a quinol + NAD(+) + 4 H(+)(out). In terms of biological role, NDH-1 shuttles electrons from NADH, via FMN and iron-sulfur (Fe-S) centers, to quinones in the respiratory chain. The immediate electron acceptor for the enzyme in this species is believed to be ubiquinone. Couples the redox reaction to proton translocation (for every two electrons transferred, four hydrogen ions are translocated across the cytoplasmic membrane), and thus conserves the redox energy in a proton gradient. This subunit may bind ubiquinone. This chain is NADH-quinone oxidoreductase subunit H, found in Bartonella henselae (strain ATCC 49882 / DSM 28221 / CCUG 30454 / Houston 1) (Rochalimaea henselae).